A 504-amino-acid polypeptide reads, in one-letter code: UDP-N-acetylmuramoylalanine--D-glutamate ligase (504 aa).

132–138 lines the ATP pocket; it reads GTNGKTT. The disordered stretch occupies residues 284-310; sequence AQDRDATDEPAPTRRRKSESTAPPDIG.

This sequence belongs to the MurCDEF family.

It localises to the cytoplasm. It catalyses the reaction UDP-N-acetyl-alpha-D-muramoyl-L-alanine + D-glutamate + ATP = UDP-N-acetyl-alpha-D-muramoyl-L-alanyl-D-glutamate + ADP + phosphate + H(+). Its pathway is cell wall biogenesis; peptidoglycan biosynthesis. Cell wall formation. Catalyzes the addition of glutamate to the nucleotide precursor UDP-N-acetylmuramoyl-L-alanine (UMA). This chain is UDP-N-acetylmuramoylalanine--D-glutamate ligase, found in Paraburkholderia phymatum (strain DSM 17167 / CIP 108236 / LMG 21445 / STM815) (Burkholderia phymatum).